The following is an 81-amino-acid chain: uncharacterized protein (81 aa).

2 consecutive transmembrane segments (helical) span residues 10–30 (FFVLLFIFTILFLIVVAFLLL) and 56–76 (VLYLFAFGILAVLFLLIAFAI).

The protein resides in the host membrane. This is an uncharacterized protein from Acidianus two-tailed virus (ATV).